The chain runs to 69 residues: Small cysteine-rich protein (69 aa).

An N-terminal signal peptide occupies residues 1–19 (MKLQLCLVLLLLGVLYVQS). The propeptide occupies 20 to 22 (VPE).

It belongs to the Cnidaria small cysteine-rich protein (SCRiP) family. delta subfamily. Post-translationally, contains 4 disulfide bonds.

The protein localises to the secreted. It localises to the nematocyst. Functionally, induces neurotoxic symptoms on zebrafish. Has also been claimed to be implied in calcification, but this function seems improbable. This is Small cysteine-rich protein from Metridium senile (Brown sea anemone).